Consider the following 449-residue polypeptide: Tubulin alpha-1C chain (449 aa).

Positions 1 to 4 match the MREC motif motif; that stretch reads MREC. Q11 is a binding site for GTP. K40 carries the post-translational modification N6-acetyllysine. The GTP site is built by E71, S140, G144, T145, T179, N206, and N228. E71 is a binding site for Mg(2+). E254 is a catalytic residue. Y282 is modified (3'-nitrotyrosine). The disordered stretch occupies residues 429 to 449; that stretch reads EKDYEEVGADSADGEDEGEEY. Residues 431–449 show a composition bias toward acidic residues; the sequence is DYEEVGADSADGEDEGEEY. At Y432 the chain carries Phosphotyrosine. The residue at position 439 (S439) is a Phosphoserine. Y449 is subject to 3'-nitrotyrosine.

This sequence belongs to the tubulin family. Dimer of alpha and beta chains. A typical microtubule is a hollow water-filled tube with an outer diameter of 25 nm and an inner diameter of 15 nM. Alpha-beta heterodimers associate head-to-tail to form protofilaments running lengthwise along the microtubule wall with the beta-tubulin subunit facing the microtubule plus end conferring a structural polarity. Microtubules usually have 13 protofilaments but different protofilament numbers can be found in some organisms and specialized cells. It depends on Mg(2+) as a cofactor. Post-translationally, some glutamate residues at the C-terminus are polyglutamylated, resulting in polyglutamate chains on the gamma-carboxyl group. Polyglutamylation plays a key role in microtubule severing by spastin (SPAST). SPAST preferentially recognizes and acts on microtubules decorated with short polyglutamate tails: severing activity by SPAST increases as the number of glutamates per tubulin rises from one to eight, but decreases beyond this glutamylation threshold. Glutamylation is also involved in cilia motility. In terms of processing, some glutamate residues at the C-terminus are monoglycylated but not polyglycylated due to the absence of functional TTLL10 in human. Monoglycylation is mainly limited to tubulin incorporated into cilia and flagella axonemes, which is required for their stability and maintenance. Flagella glycylation controls sperm motility. Both polyglutamylation and monoglycylation can coexist on the same protein on adjacent residues, and lowering glycylation levels increases polyglutamylation, and reciprocally. Acetylation of alpha chains at Lys-40 is located inside the microtubule lumen. This modification has been correlated with increased microtubule stability, intracellular transport and ciliary assembly. Post-translationally, methylation of alpha chains at Lys-40 is found in mitotic microtubules and is required for normal mitosis and cytokinesis contributing to genomic stability. In terms of processing, nitration of Tyr-449 is irreversible and interferes with normal dynein intracellular distribution. Undergoes a tyrosination/detyrosination cycle, the cyclic removal and re-addition of a C-terminal tyrosine residue by the enzymes tubulin tyrosine carboxypeptidase (MATCAP1/KIAA0895L, VASH1 or VASH2) and tubulin tyrosine ligase (TTL), respectively. Post-translationally, tyrosination promotes microtubule interaction with CAP-Gly domain-containing proteins such as CLIP1, CLIP2 and DCTN1. Tyrosination regulates the initiation of dynein-dynactin motility via interaction with DCTN1, which brings the dynein-dynactin complex into contact with microtubules. In neurons, tyrosinated tubulins mediate the initiation of retrograde vesicle transport. In terms of processing, detyrosination is involved in metaphase plate congression by guiding chromosomes during mitosis: detyrosination promotes interaction with CENPE, promoting pole-proximal transport of chromosomes toward the equator. Detyrosination increases microtubules-dependent mechanotransduction in dystrophic cardiac and skeletal muscle. In cardiomyocytes, detyrosinated microtubules are required to resist to contractile compression during contraction: detyrosination promotes association with desmin (DES) at force-generating sarcomeres, leading to buckled microtubules and mechanical resistance to contraction.

The protein resides in the cytoplasm. It localises to the cytoskeleton. It carries out the reaction GTP + H2O = GDP + phosphate + H(+). Tubulin is the major constituent of microtubules, a cylinder consisting of laterally associated linear protofilaments composed of alpha- and beta-tubulin heterodimers. Microtubules grow by the addition of GTP-tubulin dimers to the microtubule end, where a stabilizing cap forms. Below the cap, tubulin dimers are in GDP-bound state, owing to GTPase activity of alpha-tubulin. This chain is Tubulin alpha-1C chain (TUBA1C), found in Homo sapiens (Human).